A 191-amino-acid chain; its full sequence is Glucose-6-phosphate 1-dehydrogenase (191 aa).

Alanine 2 carries the post-translational modification N-acetylalanine. A Phosphoserine modification is found at serine 8. Threonine 10 carries the post-translational modification Phosphothreonine. Residues 38 to 45 (GASGDLAK) and tyrosine 86 each bind NADP(+). Aspartate 101 contacts D-glucose 6-phosphate. Histidine 106 functions as the Proton acceptor in the catalytic mechanism. Arginine 163 contributes to the NADP(+) binding site. At lysine 173 the chain carries N6-acetyllysine. Residues tyrosine 179 and tryptophan 185 each contribute to the NADP(+) site. Phosphotyrosine is present on tyrosine 179.

This sequence belongs to the glucose-6-phosphate dehydrogenase family. In terms of assembly, homotetramer; dimer of dimers. Interacts with SIRT2; the interaction is enhanced by H(2)O(2) treatment. Forms a ternary complex with ALDOB and TP53; this interaction is direct. ALDOB stabilizes the complex inhibiting G6PD activity and keeping oxidative pentose phosphate metabolism in check. Acetylated by ELP3; acetylation inhibits its homodimerization and enzyme activity. Deacetylated by SIRT2; deacetylation stimulates its enzyme activity.

It localises to the cytoplasm. The protein resides in the cytosol. It is found in the membrane. It catalyses the reaction D-glucose 6-phosphate + NADP(+) = 6-phospho-D-glucono-1,5-lactone + NADPH + H(+). Its pathway is carbohydrate degradation; pentose phosphate pathway; D-ribulose 5-phosphate from D-glucose 6-phosphate (oxidative stage): step 1/3. Functionally, cytosolic glucose-6-phosphate dehydrogenase that catalyzes the first and rate-limiting step of the oxidative branch within the pentose phosphate pathway/shunt, an alternative route to glycolysis for the dissimilation of carbohydrates and a major source of reducing power and metabolic intermediates for fatty acid and nucleic acid biosynthetic processes. This chain is Glucose-6-phosphate 1-dehydrogenase (G6PD), found in Didelphis virginiana (North American opossum).